The chain runs to 119 residues: Small ribosomal subunit protein uS13 (119 aa).

Positions 93 to 119 are disordered; sequence RRGLPLRGQRTRSNARTRKGKRKPIRS.

Belongs to the universal ribosomal protein uS13 family. Part of the 30S ribosomal subunit. Forms a loose heterodimer with protein S19. Forms two bridges to the 50S subunit in the 70S ribosome.

Its function is as follows. Located at the top of the head of the 30S subunit, it contacts several helices of the 16S rRNA. In the 70S ribosome it contacts the 23S rRNA (bridge B1a) and protein L5 of the 50S subunit (bridge B1b), connecting the 2 subunits; these bridges are implicated in subunit movement. Contacts the tRNAs in the A and P-sites. The protein is Small ribosomal subunit protein uS13 of Coxiella burnetii (strain RSA 493 / Nine Mile phase I).